The following is a 336-amino-acid chain: DNA-directed RNA polymerase subunit alpha (336 aa).

The segment at 1 to 226 (MLIAQRPTLS…ELFGLARELN (226 aa)) is alpha N-terminal domain (alpha-NTD). The segment at 241 to 336 (AALAADMALP…DDAAFSDDEL (96 aa)) is alpha C-terminal domain (alpha-CTD).

It belongs to the RNA polymerase alpha chain family. As to quaternary structure, homodimer. The RNAP catalytic core consists of 2 alpha, 1 beta, 1 beta' and 1 omega subunit. When a sigma factor is associated with the core the holoenzyme is formed, which can initiate transcription.

The enzyme catalyses RNA(n) + a ribonucleoside 5'-triphosphate = RNA(n+1) + diphosphate. Functionally, DNA-dependent RNA polymerase catalyzes the transcription of DNA into RNA using the four ribonucleoside triphosphates as substrates. In Arthrobacter sp. (strain FB24), this protein is DNA-directed RNA polymerase subunit alpha.